The primary structure comprises 161 residues: Disulfide bond formation protein B (161 aa).

At 1–8 (MQANSRTY) the chain is on the cytoplasmic side. A helical transmembrane segment spans residues 9–25 (FLLIAIVSFAMVGAALY). Topologically, residues 26–43 (MQYAENLQPCPLCIMQRF) are periplasmic. Cysteine 35 and cysteine 38 form a disulfide bridge. A helical transmembrane segment spans residues 44-58 (AFIGIGIFSLLAVIA). Topologically, residues 59-63 (QNTRT) are cytoplasmic. Residues 64–81 (LWQGLGMLSGVGGIAVAG) form a helical membrane-spanning segment. Residues 82–136 (YQVALLMNPKASCGIDPLENWVNSLPTAKLLPQVFYSDGLCTAPTPPILGLSIPA) lie on the Periplasmic side of the membrane. Residues cysteine 94 and cysteine 122 are joined by a disulfide bond. The helical transmembrane segment at 137 to 155 (WSLIWLLILTLTLAVGLIR) threads the bilayer. The Cytoplasmic portion of the chain corresponds to 156 to 161 (REKHFR).

This sequence belongs to the DsbB family.

Its subcellular location is the cell inner membrane. Required for disulfide bond formation in some periplasmic proteins. Acts by oxidizing the DsbA protein. In Cupriavidus metallidurans (strain ATCC 43123 / DSM 2839 / NBRC 102507 / CH34) (Ralstonia metallidurans), this protein is Disulfide bond formation protein B.